A 611-amino-acid polypeptide reads, in one-letter code: DNA-directed RNA polymerase subunit Rpo2C (611 aa).

Zn(2+) is bound by residues cysteine 547, cysteine 550, cysteine 565, and cysteine 568.

It belongs to the RNA polymerase beta chain family. As to quaternary structure, part of the RNA polymerase complex. Zn(2+) serves as cofactor.

It localises to the cytoplasm. It catalyses the reaction RNA(n) + a ribonucleoside 5'-triphosphate = RNA(n+1) + diphosphate. In terms of biological role, DNA-dependent RNA polymerase (RNAP) catalyzes the transcription of DNA into RNA using the four ribonucleoside triphosphates as substrates. The Rpo2 subunit (Rpo2N and Rpo2C in this organism) is implicated in DNA promoter recognition and in nucleotide binding. The protein is DNA-directed RNA polymerase subunit Rpo2C of Methanococcus vannielii (strain ATCC 35089 / DSM 1224 / JCM 13029 / OCM 148 / SB).